The sequence spans 871 residues: Pentatricopeptide repeat-containing protein At3g06920 (871 aa).

21 PPR repeats span residues 97–131 (CPES…GFGP), 132–166 (SVNT…KFRP), 167–201 (AFSA…GYEP), 202–236 (TVHL…SLDA), 237–271 (DIVL…GLKP), 272–306 (DEVT…RRVP), 307–341 (CTYA…GSIP), 342–372 (SVIA…MKKD), 376–410 (NLST…GLFP), 411–445 (NVRT…VCTP), 446–480 (DEIT…DCRT), 481–515 (NSIV…NCSP), 516–550 (DLQL…RFVP), 551–585 (DARS…GCVL), 586–620 (DTRA…GFEP), 621–655 (TVVT…RIEL), 656–690 (NVVI…GLTP), 691–725 (NLYT…KCTP), 726–760 (NQVT…GMKP), 761–795 (STIS…GGVP), and 796–830 (DSAC…GLPI).

Belongs to the PPR family. P subfamily.

This Arabidopsis thaliana (Mouse-ear cress) protein is Pentatricopeptide repeat-containing protein At3g06920.